The sequence spans 382 residues: Aminotransferase FGSG_00049 (382 aa).

Arg-80 serves as a coordination point for pyridoxal 5'-phosphate. Residue Lys-181 is modified to N6-(pyridoxal phosphate)lysine. Glu-217 contacts pyridoxal 5'-phosphate.

It belongs to the class-IV pyridoxal-phosphate-dependent aminotransferase family. Requires pyridoxal 5'-phosphate as cofactor.

The protein operates within mycotoxin biosynthesis. Functionally, aminotransferase; part of the gene cluster that mediates the biosynthesis of gramillins A and B, bicyclic lipopeptides that induce cell death in maize leaves but not in wheat leaves. The nonribosomal peptide synthetase GRA1 incorporates respectively a glutamic adic (Glu), a leucine (Leu), a serine (Ser), a hydroxyglutamine (HOGln), a 2-amino decanoic acid, and 2 cysteins (CysB and CysA). The biosynthesis of 2-amino decanoic acid incorporated in gramillins could be initiated by a fatty acid synthase composed of the alpha and beta subunits FGSG_00036 and FGSG_11656. The cytochrome P450 monooxygenase FGSG_15680 could hydroxylate the fatty acid chain. Subsequent oxidation to the ketone by the oxidoreductase FGSG_00048 and transamination by aminotransferase FGSG_00049 could form 2-amino-decanoic acid. On the other hand, FGSG_15680 could also be responsible for the HO-modified glutamine at the gamma-position. Whether hydroxylation occurs on the fully assembled product or on the Gln residue prior to assembly into the gramillins requires further proof. The thioredoxin FGSG_00043 could also be required for the disulfide-bond formation between CysA and CysB. The specific involvement of the remaining proteins from the cluster is more difficult to discern, but could have broader regulatory (FGSG_00040 and FGSG_11657) or enzymatic functions (FGSG_00044 and FGSG_00045). The final C-domain of GRA1 does not possess the expected sequence of a termination CT domain, often implicated in macrocyclization and release of a cyclopeptidein fungal NRPs; and the thioesterase FGSG_00047 may act in concert with the terminal C-domain of GRA1 to catalyze the formation of the macrocyclic anhydride and release of the products. In Gibberella zeae (strain ATCC MYA-4620 / CBS 123657 / FGSC 9075 / NRRL 31084 / PH-1) (Wheat head blight fungus), this protein is Aminotransferase FGSG_00049.